The sequence spans 97 residues: Secreted transmembrane peptide 4 (97 aa).

Residues 1 to 33 (MTKNMTKKKMGLMSPNIAAFVLPMLLVLFTISS) form the signal peptide. Residues 54 to 67 (IVFTPPSSSCGGSP) carry the SCOOP motif motif. The SxS motif essential for MIK2 binding signature appears at 60–62 (SSS). The segment at 75-97 (WMPRRPCRRTRPPGTNIPVSQSP) is disordered.

This sequence belongs to the serine rich endogenous peptide (SCOOP) phytocytokine family. As to quaternary structure, interacts with MIK2 (via extracellular leucine-rich repeat domain); this interaction triggers the formation of complex between MIK2 and the BAK1/SERK3 and SERK4 coreceptors, and subsequent BAK1 activation by phosphorylation. In terms of tissue distribution, mostly expressed in leaves and stems, and, to a lower extent, in roots, siliques, seeds and flowers.

The protein resides in the cell membrane. It is found in the secreted. The protein localises to the extracellular space. Its subcellular location is the apoplast. Brassicaceae-specific phytocytokine (plant endogenous peptide released into the apoplast) perceived by MIK2 in a BAK1/SERK3 and SERK4 coreceptors-dependent manner, that modulates various physiological and antimicrobial processes including growth prevention and reactive oxygen species (ROS) response regulation. Prevents general growth and development. The sequence is that of Secreted transmembrane peptide 4 from Arabidopsis thaliana (Mouse-ear cress).